The sequence spans 252 residues: Probable transcriptional regulatory protein Lxx10750 (252 aa).

The protein belongs to the TACO1 family.

It localises to the cytoplasm. This is Probable transcriptional regulatory protein Lxx10750 from Leifsonia xyli subsp. xyli (strain CTCB07).